The primary structure comprises 56 residues: Large ribosomal subunit protein uL30 (56 aa).

This sequence belongs to the universal ribosomal protein uL30 family. As to quaternary structure, part of the 50S ribosomal subunit.

This is Large ribosomal subunit protein uL30 from Nitratidesulfovibrio vulgaris (strain ATCC 29579 / DSM 644 / CCUG 34227 / NCIMB 8303 / VKM B-1760 / Hildenborough) (Desulfovibrio vulgaris).